The following is a 330-amino-acid chain: MRVTMSLEALTTEALAAIAAAQDLVALDQVRVQFTGKKSQLAEQSKALGKMDPEERKVQGAAIHAVRETINNALTERQTALQQAALAQKLASETIDITLPGRGQCVGTVHPVTQVQERICQFFTKAGFTVATGPEVEDDYHNFEALNIPGHHPARAMHDTFYFDANHLLRTHTSGVQIRTMETSQPPIRIVCPGRVYRCDSDQTHSPMFHQIEGLYVAENTSFAELKGLLINLLNEFFEKDLKVRFRPSYFPFTEPSAEVDIMDERGRWLEVLGCGMVHPNVLRAAGIDPDKYKGFAFGLGVERFAMLRYGINDLRMFYQNDVRFLRQFA.

Glu255 lines the Mg(2+) pocket.

It belongs to the class-II aminoacyl-tRNA synthetase family. Phe-tRNA synthetase alpha subunit type 1 subfamily. In terms of assembly, tetramer of two alpha and two beta subunits. Mg(2+) serves as cofactor.

It is found in the cytoplasm. The catalysed reaction is tRNA(Phe) + L-phenylalanine + ATP = L-phenylalanyl-tRNA(Phe) + AMP + diphosphate + H(+). This Acinetobacter baumannii (strain AYE) protein is Phenylalanine--tRNA ligase alpha subunit.